The sequence spans 161 residues: Probable ribosome biogenesis protein RLP24 (161 aa).

It belongs to the eukaryotic ribosomal protein eL24 family. In terms of assembly, associated with nucleolar and cytoplasmic pre-60S particles. At the end of biogenesis it dissociates from cytoplasmic pre-60S particles and is likely to be exchanged for its ribosomal homolog, RPL24.

The protein localises to the nucleus. Its subcellular location is the nucleolus. Functionally, involved in the biogenesis of the 60S ribosomal subunit. Ensures the docking of GTPBP4/NOG1 to pre-60S particles. This Danio rerio (Zebrafish) protein is Probable ribosome biogenesis protein RLP24 (rsl24d1).